Here is a 343-residue protein sequence, read N- to C-terminus: Methylthioribose-1-phosphate isomerase (343 aa).

Residues 48-50 (RGA), Arg-88, and Gln-193 contribute to the substrate site. Asp-234 serves as the catalytic Proton donor. Residue 244-245 (NK) coordinates substrate.

This sequence belongs to the eIF-2B alpha/beta/delta subunits family. MtnA subfamily.

The enzyme catalyses 5-(methylsulfanyl)-alpha-D-ribose 1-phosphate = 5-(methylsulfanyl)-D-ribulose 1-phosphate. It participates in amino-acid biosynthesis; L-methionine biosynthesis via salvage pathway; L-methionine from S-methyl-5-thio-alpha-D-ribose 1-phosphate: step 1/6. Catalyzes the interconversion of methylthioribose-1-phosphate (MTR-1-P) into methylthioribulose-1-phosphate (MTRu-1-P). In Thermotoga neapolitana (strain ATCC 49049 / DSM 4359 / NBRC 107923 / NS-E), this protein is Methylthioribose-1-phosphate isomerase.